The following is a 579-amino-acid chain: Adenine/guanine permease AZG1 (579 aa).

Transmembrane regions (helical) follow at residues 52 to 72 (AGTA…SILS), 131 to 151 (LIVA…LMAN), 183 to 203 (TALA…AIGF), 221 to 241 (AGIG…IGLV), 260 to 280 (ISLA…AGGS), 292 to 312 (MESP…YCLV), 320 to 340 (IYGI…VTAF), 379 to 399 (FWEA…GTLY), 414 to 434 (FAGQ…GSLL), 459 to 479 (AITV…LASI), 480 to 500 (PAWA…KSVT), and 514 to 534 (FVTM…IGGI).

It belongs to the nucleobase:cation symporter-2 (NCS2) (TC 2.A.40) family. Azg-like subfamily.

Its subcellular location is the membrane. Functionally, transports natural purines (adenine and guanine) as well as purine analogs. Confers sensitivity to 8-azaadenine and 8-azaguanine (8-azg). The protein is Adenine/guanine permease AZG1 (AZG1) of Arabidopsis thaliana (Mouse-ear cress).